A 318-amino-acid chain; its full sequence is Thymidylate synthase (318 aa).

DUMP is bound by residues arginine 25 and 180–181 (RR). Catalysis depends on cysteine 200, which acts as the Nucleophile. DUMP contacts are provided by residues 220–223 (RSAD), asparagine 231, and 261–263 (HIY). Aspartate 223 contributes to the (6R)-5,10-methylene-5,6,7,8-tetrahydrofolate binding site. Residue alanine 317 coordinates (6R)-5,10-methylene-5,6,7,8-tetrahydrofolate.

The protein belongs to the thymidylate synthase family. Bacterial-type ThyA subfamily. In terms of assembly, homodimer.

Its subcellular location is the cytoplasm. The catalysed reaction is dUMP + (6R)-5,10-methylene-5,6,7,8-tetrahydrofolate = 7,8-dihydrofolate + dTMP. The protein operates within pyrimidine metabolism; dTTP biosynthesis. Functionally, catalyzes the reductive methylation of 2'-deoxyuridine-5'-monophosphate (dUMP) to 2'-deoxythymidine-5'-monophosphate (dTMP) while utilizing 5,10-methylenetetrahydrofolate (mTHF) as the methyl donor and reductant in the reaction, yielding dihydrofolate (DHF) as a by-product. This enzymatic reaction provides an intracellular de novo source of dTMP, an essential precursor for DNA biosynthesis. The chain is Thymidylate synthase from Ligilactobacillus salivarius (strain UCC118) (Lactobacillus salivarius).